A 202-amino-acid chain; its full sequence is Na(+)-translocating NADH-quinone reductase subunit E (202 aa).

Transmembrane regions (helical) follow at residues Ser11–Met31, Ile35–Ala55, Phe81–Val101, Gly114–Val134, Val144–Ile164, and Leu180–Ile200.

The protein belongs to the NqrDE/RnfAE family. In terms of assembly, composed of six subunits; NqrA, NqrB, NqrC, NqrD, NqrE and NqrF.

It is found in the cell inner membrane. It catalyses the reaction a ubiquinone + n Na(+)(in) + NADH + H(+) = a ubiquinol + n Na(+)(out) + NAD(+). NQR complex catalyzes the reduction of ubiquinone-1 to ubiquinol by two successive reactions, coupled with the transport of Na(+) ions from the cytoplasm to the periplasm. NqrA to NqrE are probably involved in the second step, the conversion of ubisemiquinone to ubiquinol. This Cellvibrio japonicus (strain Ueda107) (Pseudomonas fluorescens subsp. cellulosa) protein is Na(+)-translocating NADH-quinone reductase subunit E.